We begin with the raw amino-acid sequence, 460 residues long: NADH-ubiquinone oxidoreductase chain 4 (460 aa).

The next 12 membrane-spanning stretches (helical) occupy residues 20 to 42 (PKWL…LTWL), 61 to 81 (PLST…VLAS), 93 to 113 (QRLY…AFGA), 114 to 134 (TEII…LIII), 148 to 168 (TYFL…LLLL), 195 to 215 (IWWA…GVHL), 225 to 245 (PVAG…YGMM), 258 to 278 (LAYP…SICL), 285 to 304 (SLIA…GILI), 309 to 331 (GFTG…FCLA), 351 to 371 (MIFP…LALP), and 394 to 414 (IILT…LFLM).

Belongs to the complex I subunit 4 family.

The protein localises to the mitochondrion membrane. The enzyme catalyses a ubiquinone + NADH + 5 H(+)(in) = a ubiquinol + NAD(+) + 4 H(+)(out). In terms of biological role, core subunit of the mitochondrial membrane respiratory chain NADH dehydrogenase (Complex I) that is believed to belong to the minimal assembly required for catalysis. Complex I functions in the transfer of electrons from NADH to the respiratory chain. The immediate electron acceptor for the enzyme is believed to be ubiquinone. The protein is NADH-ubiquinone oxidoreductase chain 4 (MT-ND4) of Formosania lacustris (Oriental stream loach).